We begin with the raw amino-acid sequence, 740 residues long: MRGGSRHLSNEEDVSGCEDCIIISGTCSDQSSDPKTVPLTQVLEAVCTVENRGCRTSSQPSKRKASSLISYVQDLTGDGDEDRDGEVGGSSGSGTPVMPQLFCETRIPSKTPAPLSWQANTSASTPWLSPASPYPIIDLTDEDVIPQSISTPSVDWSQDSHQEGMDTTQVDAESRDGGNIEYQVSADKLLLSQSCILAAFYKLVPYRESIYRTLEKARVRAGKACPSSPGESLEDQLKPMLEWAHGGFKPTGIEGLKPNKKQPENKSRRRTTNDPAASESSPPKRLKTNSYGGKDRGEDEESREQMASDVTNNKGNLEDHCLSCGRKDPVSFHPLFEGGLCQSCRDRFLELFYMYDEDGYQSYCTVCCEGRELLLCSNTSCCRCFCVECLEVLVGAGTAEDVKLQEPWSCYMCLPQRCHGVLRRRKDWNMRLQDFFTTDPDLEEFEPPKLYPAIPAAKRRPIRVLSLFDGIATGYLVLKELGIKVEKYIASEVCAESIAVGTVKHEGQIKYVDDIRNITKEHIDEWGPFDLVIGGSPCNDLSCVNPVRKGLFEGTGRLFFEFYRLLNYSCPEEEDDRPFFWMFENVVAMEVGDKRDISRFLECNPVMIDAIKVSAAHRARYFWGNLPGMNRPVMASKNDKLELQDCLEFSRTAKLKKVQTITTKSNSIRQGKNQLFPVVMNGKDDVLWCTELERIFGFPEHYTDVSNMGRGARQKLLGRSWSVPVIRHLFAPLKDHFACE.

2 disordered regions span residues Leu-75–Pro-99 and Phe-248–Asn-312. An ADD domain is found at Asp-309–Asp-441. Residues His-320–Glu-350 form a GATA-type; atypical zinc finger. The PHD-type; atypical zinc finger occupies Gln-361 to Arg-417. The region spanning Ile-462–Glu-740 is the SAM-dependent MTase C5-type domain. Residues Ile-471, Thr-473, Glu-492, Asp-514, and Ile-515 each contribute to the S-adenosyl-L-methionine site. The active site involves Cys-538. 2 residues coordinate S-adenosyl-L-methionine: Arg-719 and Trp-721.

Belongs to the class I-like SAM-binding methyltransferase superfamily. C5-methyltransferase family. In terms of assembly, homodimer. Interacts with DNMT3L. Interacts with SPOCD1; recruiting Dnmt3C to transposons. As to expression, specifically expressed in testis.

The protein resides in the nucleus. The catalysed reaction is a 2'-deoxycytidine in DNA + S-adenosyl-L-methionine = a 5-methyl-2'-deoxycytidine in DNA + S-adenosyl-L-homocysteine + H(+). Its function is as follows. DNA methyltransferase that specifically methylates the promoters of evolutionarily young retrotransposons in the male germline. De novo methylation and subsequent repression of transposable elements prevents their mobilization, which is essential for germline integrity. Compared to Dnmt3a and Dnmt3b, shows lower DNA methyltransferase efficiency. The sequence is that of DNA (cytosine-5)-methyltransferase 3C from Mus musculus (Mouse).